The following is a 216-amino-acid chain: Elongation factor Ts (216 aa).

The interval 81–84 is involved in Mg(2+) ion dislocation from EF-Tu; sequence TDFV.

It belongs to the EF-Ts family.

The protein resides in the cytoplasm. Associates with the EF-Tu.GDP complex and induces the exchange of GDP to GTP. It remains bound to the aminoacyl-tRNA.EF-Tu.GTP complex up to the GTP hydrolysis stage on the ribosome. In Geotalea uraniireducens (strain Rf4) (Geobacter uraniireducens), this protein is Elongation factor Ts.